Reading from the N-terminus, the 105-residue chain is UPF0145 protein VP1283 (105 aa).

It belongs to the UPF0145 family.

This is UPF0145 protein VP1283 from Vibrio parahaemolyticus serotype O3:K6 (strain RIMD 2210633).